The sequence spans 84 residues: Small ribosomal subunit protein uS17 (84 aa).

Belongs to the universal ribosomal protein uS17 family. In terms of assembly, part of the 30S ribosomal subunit.

Its function is as follows. One of the primary rRNA binding proteins, it binds specifically to the 5'-end of 16S ribosomal RNA. The protein is Small ribosomal subunit protein uS17 of Proteus mirabilis (strain HI4320).